The sequence spans 347 residues: Ribosomal RNA small subunit methyltransferase C (347 aa).

Belongs to the methyltransferase superfamily. RsmC family. In terms of assembly, monomer.

The protein resides in the cytoplasm. The catalysed reaction is guanosine(1207) in 16S rRNA + S-adenosyl-L-methionine = N(2)-methylguanosine(1207) in 16S rRNA + S-adenosyl-L-homocysteine + H(+). Specifically methylates the guanine in position 1207 of 16S rRNA in the 30S particle. In Shewanella putrefaciens (strain CN-32 / ATCC BAA-453), this protein is Ribosomal RNA small subunit methyltransferase C.